The sequence spans 1220 residues: Plasma membrane calcium-transporting ATPase 1 (1220 aa).

Gly2 is modified (N-acetylglycine). Residues 2 to 105 lie on the Cytoplasmic side of the membrane; the sequence is GDMANNSVAY…KTFLQLVWEA (104 aa). Residues Ser8 and Ser17 each carry the phosphoserine modification. Residues 106–126 form a helical membrane-spanning segment; the sequence is LQDVTLIILEIAAIVSLGLSF. The Extracellular segment spans residues 127-154; it reads YQPPEGDNALCGEVSVGEEEGEGETGWI. Residues 155–175 traverse the membrane as a helical segment; sequence EGAAILLSVVCVVLVTAFNDW. Residues 176–366 lie on the Cytoplasmic side of the membrane; it reads SKEKQFRGLQ…KEKSVLQGKL (191 aa). The interval 297-356 is disordered; it reads EEEKKDEKKKEKKNKKQDGAIENRNKAKAQDGAAMEMQPLKSEEGGDGDEKDKKKANLPK. Basic and acidic residues-rich tracts occupy residues 312–325 and 337–356; these read KQDGAIENRNKAKA and KSEEGGDGDEKDKKKANLPK. Residue Ser338 is modified to Phosphoserine. A helical membrane pass occupies residues 367 to 386; sequence TKLAVQIGKAGLLMSAITVI. Topologically, residues 387–418 are extracellular; the sequence is ILVLYFVIDTFWVQKRPWLAECTPIYIQYFVK. A helical membrane pass occupies residues 419 to 439; the sequence is FFIIGVTVLVVAVPEGLPLAV. Over 440–855 the chain is Cytoplasmic; the sequence is TISLAYSVKK…RNVYDSISKF (416 aa). Asp475 acts as the 4-aspartylphosphate intermediate in catalysis. Mg(2+) is bound by residues Asp475, Thr477, and Asp797. A helical transmembrane segment spans residues 856 to 876; sequence LQFQLTVNVVAVIVAFTGACI. Residues 877 to 882 are Extracellular-facing; sequence TQDSPL. The chain crosses the membrane as a helical span at residues 883–903; that stretch reads KAVQMLWVNLIMDTLASLALA. Over 904–927 the chain is Cytoplasmic; sequence TEPPTESLLLRKPYGRNKPLISRT. Residues 928-948 traverse the membrane as a helical segment; that stretch reads MMKNILGHAFYQLVVVFTLLF. Residues 949–971 are Extracellular-facing; it reads AGEKFFDIDSGRNAPLHAPPSEH. Residues 972 to 991 traverse the membrane as a helical segment; that stretch reads YTIVFNTFVLMQLFNEINAR. At 992 to 1005 the chain is on the cytoplasmic side; that stretch reads KIHGERNVFEGIFN. Residues 1006 to 1027 form a helical membrane-spanning segment; that stretch reads NAIFCTIVLGTFVVQIIIVQFG. Topologically, residues 1028–1039 are extracellular; the sequence is GKPFSCSELSIE. A helical membrane pass occupies residues 1040–1060; that stretch reads QWLWSIFLGMGTLLWGQLIST. Topologically, residues 1061 to 1220 are cytoplasmic; sequence IPTSRLKFLK…SPLHSLETSL (160 aa). The segment at 1100-1117 is calmodulin-binding subdomain A; sequence LRRGQILWFRGLNRIQTQ. Thr1116 carries the post-translational modification Phosphothreonine; by PKC. The interval 1118–1220 is required for basolateral membrane targeting; the sequence is IRVVNAFRSS…SPLHSLETSL (103 aa). Residues Ser1140 and Ser1155 each carry the phosphoserine modification. The tract at residues 1160 to 1220 is disordered; it reads PLIDDTDAED…SPLHSLETSL (61 aa). Thr1165 bears the Phosphothreonine mark. Ser1178 carries the post-translational modification Phosphoserine; by PKA. Phosphoserine is present on Ser1182. Over residues 1200–1220 the composition is skewed to polar residues; it reads MNKSATSSSPGSPLHSLETSL.

This sequence belongs to the cation transport ATPase (P-type) (TC 3.A.3) family. Type IIB subfamily. Monomer. Dimer. Oligomer. Calmodulin binding. Interacts with PDZD11. Interacts with SLC35G1 and STIM1; inhibits calcium-transporting ATPase activity after store depletion. Interacts with YWHAE; interacts with the monomeric and dimeric forms of the YWHAE but prefer the monomer form; this interaction inhibits calcium-transporting ATPase activity. Interacts with NPTN; this interaction stabilizes ATP2B1 and increases ATPase activity; this interaction controls T cell calcium homeostasis following T cell activation. Interacts with EPB41; regulates small intestinal calcium absorption through regulation of membrane expression of ATP2B1. In terms of tissue distribution, isoform B: Ubiquitously expressed. Isoform C: Found in brain cortex, skeletal muscle and heart muscle. Isoform D: Has only been found in fetal skeletal muscle. Isoform K: Found in small intestine and liver. Abundantly expressed in the endometrial epithelial cells and glandular epithelial cells in early-proliferative phase and early-secretory phases.

The protein localises to the cell membrane. It localises to the basolateral cell membrane. The protein resides in the synapse. It is found in the presynaptic cell membrane. Its subcellular location is the cytoplasmic vesicle. The protein localises to the secretory vesicle. It localises to the synaptic vesicle membrane. It catalyses the reaction Ca(2+)(in) + ATP + H2O = Ca(2+)(out) + ADP + phosphate + H(+). Its function is as follows. Catalyzes the hydrolysis of ATP coupled with the transport of calcium from the cytoplasm to the extracellular space thereby maintaining intracellular calcium homeostasis. Plays a role in blood pressure regulation through regulation of intracellular calcium concentration and nitric oxide production leading to regulation of vascular smooth muscle cells vasoconstriction. Positively regulates bone mineralization through absorption of calcium from the intestine. Plays dual roles in osteoclast differentiation and survival by regulating RANKL-induced calcium oscillations in preosteoclasts and mediating calcium extrusion in mature osteoclasts. Regulates insulin sensitivity through calcium/calmodulin signaling pathway by regulating AKT1 activation and NOS3 activation in endothelial cells. May play a role in synaptic transmission by modulating calcium and proton dynamics at the synaptic vesicles. The sequence is that of Plasma membrane calcium-transporting ATPase 1 from Homo sapiens (Human).